The sequence spans 768 residues: Pentatricopeptide repeat-containing protein At4g01030, mitochondrial (768 aa).

The N-terminal 25 residues, 1–25 (MYRFLGLTIHGGLIKRGLDNSDTRV), are a transit peptide targeting the mitochondrion. 16 PPR repeats span residues 22–52 (DTRVVSASMGFYGRCVSLGFANKLFDEMPKR), 53–87 (DDLAWNEIVMVNLRSGNWEKAVELFREMQFSGAKA), 88–122 (YDSTMVKLLQVCSNKEGFAEGRQIHGYVLRLGLES), 123–153 (NVSMCNSLIVMYSRNGKLELSRKVFNSMKDR), 154–188 (NLSSWNSILSSYTKLGYVDDAIGLLDEMEICGLKP), 189–223 (DIVTWNSLLSGYASKGLSKDAIAVLKRMQIAGLKP), 224–254 (STSSISSLLQAVAEPGHLKLGKAIHGYILRN), 259–289 (DVYVETTLIDMYIKTGYLPYARMVFDMMDAK), 290–324 (NIVAWNSLVSGLSYACLLKDAEALMIRMEKEGIKP), 325–359 (DAITWNSLASGYATLGKPEKALDVIGKMKEKGVAP), 360–394 (NVVSWTAIFSGCSKNGNFRNALKVFIKMQEEGVGP), 395–429 (NAATMSTLLKILGCLSLLHSGKEVHGFCLRKNLIC), 430–460 (DAYVATALVDMYGKSGDLQSAIEIFWGIKNK), 461–495 (SLASWNCMLMGYAMFGRGEEGIAAFSVMLEAGMEP), 496–526 (DAITFTSVLSVCKNSGLVQEGWKYFDLMRSR), and 532–562 (TIEHCSCMVDLLGRSGYLDEAWDFIQTMSLK). Residues 567–642 (IWGAFLSSCK…QDLWSWIQID (76 aa)) form a type E motif region. Residues 643–673 (QTVHIFYAEGKTHPDEGDIYFELYKLVSEMK) form a type E(+) motif region. A type DYW motif region spans residues 674 to 768 (KSGYVPDTSC…DGKCSCNDSW (95 aa)).

The protein belongs to the PPR family. PCMP-H subfamily.

The protein resides in the mitochondrion. The chain is Pentatricopeptide repeat-containing protein At4g01030, mitochondrial (PCMP-H65) from Arabidopsis thaliana (Mouse-ear cress).